A 289-amino-acid polypeptide reads, in one-letter code: Bifunctional protein FolD (289 aa).

NADP(+) is bound by residues 166-168 (GRS), Ser191, and Ile232.

This sequence belongs to the tetrahydrofolate dehydrogenase/cyclohydrolase family. In terms of assembly, homodimer.

It catalyses the reaction (6R)-5,10-methylene-5,6,7,8-tetrahydrofolate + NADP(+) = (6R)-5,10-methenyltetrahydrofolate + NADPH. The catalysed reaction is (6R)-5,10-methenyltetrahydrofolate + H2O = (6R)-10-formyltetrahydrofolate + H(+). It functions in the pathway one-carbon metabolism; tetrahydrofolate interconversion. Catalyzes the oxidation of 5,10-methylenetetrahydrofolate to 5,10-methenyltetrahydrofolate and then the hydrolysis of 5,10-methenyltetrahydrofolate to 10-formyltetrahydrofolate. The chain is Bifunctional protein FolD from Synechococcus sp. (strain JA-3-3Ab) (Cyanobacteria bacterium Yellowstone A-Prime).